The chain runs to 227 residues: Phosphoribosylformylglycinamidine synthase subunit PurQ (227 aa).

The Glutamine amidotransferase type-1 domain occupies 2-226 (KFAVIQFPGS…VKAWKEEQVN (225 aa)). C86 (nucleophile) is an active-site residue. Catalysis depends on residues H195 and E197.

Part of the FGAM synthase complex composed of 1 PurL, 1 PurQ and 2 PurS subunits.

The protein localises to the cytoplasm. The catalysed reaction is N(2)-formyl-N(1)-(5-phospho-beta-D-ribosyl)glycinamide + L-glutamine + ATP + H2O = 2-formamido-N(1)-(5-O-phospho-beta-D-ribosyl)acetamidine + L-glutamate + ADP + phosphate + H(+). It catalyses the reaction L-glutamine + H2O = L-glutamate + NH4(+). Its pathway is purine metabolism; IMP biosynthesis via de novo pathway; 5-amino-1-(5-phospho-D-ribosyl)imidazole from N(2)-formyl-N(1)-(5-phospho-D-ribosyl)glycinamide: step 1/2. Its function is as follows. Part of the phosphoribosylformylglycinamidine synthase complex involved in the purines biosynthetic pathway. Catalyzes the ATP-dependent conversion of formylglycinamide ribonucleotide (FGAR) and glutamine to yield formylglycinamidine ribonucleotide (FGAM) and glutamate. The FGAM synthase complex is composed of three subunits. PurQ produces an ammonia molecule by converting glutamine to glutamate. PurL transfers the ammonia molecule to FGAR to form FGAM in an ATP-dependent manner. PurS interacts with PurQ and PurL and is thought to assist in the transfer of the ammonia molecule from PurQ to PurL. This chain is Phosphoribosylformylglycinamidine synthase subunit PurQ, found in Listeria monocytogenes serotype 4b (strain CLIP80459).